Reading from the N-terminus, the 232-residue chain is Phosphatidylserine decarboxylase proenzyme (232 aa).

Catalysis depends on Ser190, which acts as the Schiff-base intermediate with substrate; via pyruvic acid. Ser190 is modified (pyruvic acid (Ser); by autocatalysis).

Belongs to the phosphatidylserine decarboxylase family. PSD-A subfamily. As to quaternary structure, heterodimer of a large membrane-associated beta subunit and a small pyruvoyl-containing alpha subunit. The cofactor is pyruvate. Post-translationally, is synthesized initially as an inactive proenzyme. Formation of the active enzyme involves a self-maturation process in which the active site pyruvoyl group is generated from an internal serine residue via an autocatalytic post-translational modification. Two non-identical subunits are generated from the proenzyme in this reaction, and the pyruvate is formed at the N-terminus of the alpha chain, which is derived from the carboxyl end of the proenzyme. The post-translation cleavage follows an unusual pathway, termed non-hydrolytic serinolysis, in which the side chain hydroxyl group of the serine supplies its oxygen atom to form the C-terminus of the beta chain, while the remainder of the serine residue undergoes an oxidative deamination to produce ammonia and the pyruvoyl prosthetic group on the alpha chain.

The protein resides in the cell membrane. The catalysed reaction is a 1,2-diacyl-sn-glycero-3-phospho-L-serine + H(+) = a 1,2-diacyl-sn-glycero-3-phosphoethanolamine + CO2. It participates in phospholipid metabolism; phosphatidylethanolamine biosynthesis; phosphatidylethanolamine from CDP-diacylglycerol: step 2/2. Functionally, catalyzes the formation of phosphatidylethanolamine (PtdEtn) from phosphatidylserine (PtdSer). The polypeptide is Phosphatidylserine decarboxylase proenzyme (Rhodopseudomonas palustris (strain ATCC BAA-98 / CGA009)).